A 160-amino-acid polypeptide reads, in one-letter code: MMERFEKIEMKIPAKAEYVAIIRLTMAGVANRTGFAYDDIEDMKIAISEACTNIVQHAYKEDVGEIAIVFGLYEDRLEIMVADNGVSFDFNNLRSKVGPYDISKPVEHLPENGLGLYLINTLMDDIQIMHDEGMTVLMTKYIQREQVENDGNPISTYNSY.

This sequence belongs to the anti-sigma-factor family.

It carries out the reaction L-seryl-[protein] + ATP = O-phospho-L-seryl-[protein] + ADP + H(+). The enzyme catalyses L-threonyl-[protein] + ATP = O-phospho-L-threonyl-[protein] + ADP + H(+). Negative regulator of sigma-B activity. Phosphorylates and inactivates its specific antagonist protein, RsbV. Upon phosphorylation of RsbV, RsbW is released and binds to sigma-B, thereby blocking its ability to form an RNA polymerase holoenzyme (E-sigma-B). The protein is Serine-protein kinase RsbW of Bacillus cereus (strain AH187).